The primary structure comprises 320 residues: Aminoacyl tRNA synthase complex-interacting multifunctional protein 2 (320 aa).

Residues 31–52 are disordered; the sequence is HSKTTSPATDAGHVQETSEPSL. Residue Ser-36 is modified to Phosphoserine. The tract at residues 82–162 is interaction with PRKN; it reads TPDADLDVTN…HTHSSVKNVP (81 aa). The interval 162 to 225 is interaction with TP53; sequence PENLLKCFGE…FLFSLFGQKH (64 aa). The 98-residue stretch at 220–317 folds into the GST C-terminal domain; that stretch reads LFGQKHSAVN…NLVPFSTALQ (98 aa).

Part of the multisynthetase complex (MSC), a multisubunit complex that groups tRNA ligases for Arg (RARS1), Asp (DARS1), Gln (QARS1), Ile (IARS1), Leu (LARS1), Lys (KARS1), Met (MARS1) the bifunctional ligase for Glu and Pro (EPRS1) and the auxiliary subunits AIMP1/p43, AIMP2/p38 and EEF1E1/p18. Interacts (via N-terminus) with KARS1. Interacts with EPRS1. Forms a linear complex that contains MARS1, EEF1E1, EPRS1 and AIMP2 that is at the core of the multisubunit complex. Binds FUBP1 (via C-terminus). Interacts in both its unphosphorylated and phosphorylated forms with p53/TP53 (via N-terminus) in the nucleus following UV irradiation. Interacts (via N-terminus) with PRKN/parkin (via first RING-type domain). Interacts with TARS3. Phosphorylated on serine residues in response to UV irradiation. In terms of processing, ubiquitinated by PRKN, leading to its degradation by the proteasome.

The protein localises to the cytoplasm. It localises to the cytosol. It is found in the nucleus. Its function is as follows. Required for assembly and stability of the aminoacyl-tRNA synthase complex. Mediates ubiquitination and degradation of FUBP1, a transcriptional activator of MYC, leading to MYC down-regulation which is required for aveolar type II cell differentiation. Blocks MDM2-mediated ubiquitination and degradation of p53/TP53. Functions as a proapoptotic factor. The chain is Aminoacyl tRNA synthase complex-interacting multifunctional protein 2 (AIMP2) from Cricetulus griseus (Chinese hamster).